The chain runs to 269 residues: 2-dehydro-3-deoxyphosphooctonate aldolase (269 aa).

The protein belongs to the KdsA family.

Its subcellular location is the cytoplasm. The enzyme catalyses D-arabinose 5-phosphate + phosphoenolpyruvate + H2O = 3-deoxy-alpha-D-manno-2-octulosonate-8-phosphate + phosphate. It functions in the pathway carbohydrate biosynthesis; 3-deoxy-D-manno-octulosonate biosynthesis; 3-deoxy-D-manno-octulosonate from D-ribulose 5-phosphate: step 2/3. It participates in bacterial outer membrane biogenesis; lipopolysaccharide biosynthesis. The polypeptide is 2-dehydro-3-deoxyphosphooctonate aldolase (Chlamydia trachomatis serovar L2 (strain ATCC VR-902B / DSM 19102 / 434/Bu)).